We begin with the raw amino-acid sequence, 227 residues long: MIHHIPNVLNKEQVAEFRKLMEEANWVGGKVTAGTLSASVKRNQQLSEQDPLTHHLSDIVIKAIWQNPLFQAAALPHKIIPPLFNRYDEHESFGFHVDNSIRLIRGTAEQIRTDLSCTLFLSEPDEYEGGDLVIEDTYGYHEVKLPAGDVVLYPSTSLHEVSSITAGTRFASFFWVQSLVRDDSKRHLLFSLDESIRELRKSHGDSYSEVMKLTNIYHNLIRMWSEL.

In terms of domain architecture, Fe2OG dioxygenase spans 78–178; that stretch reads KIIPPLFNRY…RFASFFWVQS (101 aa). Fe cation is bound by residues His-96, Asp-98, and His-159. Residue Arg-169 participates in 2-oxoglutarate binding.

Fe(2+) serves as cofactor. Requires L-ascorbate as cofactor.

The protein is PKHD-type hydroxylase A1S_0473 of Acinetobacter baumannii (strain ATCC 17978 / DSM 105126 / CIP 53.77 / LMG 1025 / NCDC KC755 / 5377).